We begin with the raw amino-acid sequence, 589 residues long: Arginine--tRNA ligase (589 aa).

The 'HIGH' region signature appears at 123–133 (ANVAKPMHVGH).

It belongs to the class-I aminoacyl-tRNA synthetase family. As to quaternary structure, monomer.

It is found in the cytoplasm. The catalysed reaction is tRNA(Arg) + L-arginine + ATP = L-arginyl-tRNA(Arg) + AMP + diphosphate. This chain is Arginine--tRNA ligase, found in Hyphomonas neptunium (strain ATCC 15444).